Here is a 490-residue protein sequence, read N- to C-terminus: N-succinylglutamate 5-semialdehyde dehydrogenase (490 aa).

Residue 224–229 (GSSPTG) participates in NAD(+) binding. Residues glutamate 247 and cysteine 281 contribute to the active site.

It belongs to the aldehyde dehydrogenase family. AstD subfamily.

It catalyses the reaction N-succinyl-L-glutamate 5-semialdehyde + NAD(+) + H2O = N-succinyl-L-glutamate + NADH + 2 H(+). The protein operates within amino-acid degradation; L-arginine degradation via AST pathway; L-glutamate and succinate from L-arginine: step 4/5. Its function is as follows. Catalyzes the NAD-dependent reduction of succinylglutamate semialdehyde into succinylglutamate. In Hahella chejuensis (strain KCTC 2396), this protein is N-succinylglutamate 5-semialdehyde dehydrogenase.